A 521-amino-acid polypeptide reads, in one-letter code: Vascular endothelial zinc finger 1 (521 aa).

The C2H2-type 1 zinc-finger motif lies at 74 to 96 (FVCTYCSKAFRDSYHLRRHESCH). Residues 140-155 (TTSSSGTNPSSSASTT) are compositionally biased toward low complexity. The interval 140–167 (TTSSSGTNPSSSASTTAMPVTQSVKKPS) is disordered. 5 consecutive C2H2-type zinc fingers follow at residues 174–196 (HACEMCGKAFRDVYHLNRHKLSH), 202–224 (FECPICNQRFKRKDRMTYHVRSH), 232–255 (YTCSVCGKGFSRPDHLSCHVKHVH), 261–283 (FKCQTCTAAFATKDRLRTHMVRH), and 287–308 (VSCNICGKLLSAAYITSHLKTH). Lysine 362 is modified (N6-acetyllysine). 4 tandem repeats follow at residues 394–400 (PVTLTTP), 445–451 (PVTITSP), 457–463 (PLTLTTP), and 479–485 (PVTITSP). Residues 394–485 (PVTLTTPFSI…IAHPVTITSP (92 aa)) form a 4 X 7 AA repeats of P-[LV]-T-[IL]-T-[ST]-P region.

This sequence belongs to the krueppel C2H2-type zinc-finger protein family. As to quaternary structure, interacts with ARHGAP22. In terms of tissue distribution, ubiquitously expressed. Highest levels in skeletal muscle and kidney.

The protein localises to the nucleus. Possible transcription factor. Specifically binds to the CT/GC-rich region of the interleukin-3 promoter and mediates tax transactivation of IL-3. In Homo sapiens (Human), this protein is Vascular endothelial zinc finger 1 (VEZF1).